The primary structure comprises 207 residues: Succinyl-CoA:3-ketoacid coenzyme A transferase subunit B (207 aa).

Residue Glu43 is part of the active site.

This sequence belongs to the 3-oxoacid CoA-transferase subunit B family. In terms of assembly, heterodimer of a subunit A and a subunit B.

It carries out the reaction a 3-oxo acid + succinyl-CoA = a 3-oxoacyl-CoA + succinate. This Helicobacter pylori (strain J99 / ATCC 700824) (Campylobacter pylori J99) protein is Succinyl-CoA:3-ketoacid coenzyme A transferase subunit B (scoB).